The sequence spans 222 residues: MSVRHSGIGMTSLRTRVRMVERLREQGIKDEVVLAAMGFIPRHLFVEAALASRAYEDVALPINYGQTISSPWIVGRMTELLRNGGSNSLRKILEIGTGCGYQTAVLAKIASEVYSIERIGPLLTRTRIRLRELGILNIHLKHADGMRGLPEAGLFDGIMMTAVIPEIPETLLEQLAMGGRMVFPKGNRKQYLCVIDHTTEGFVETILDEVMFVPILPGTINR.

Ser69 is a catalytic residue.

The protein belongs to the methyltransferase superfamily. L-isoaspartyl/D-aspartyl protein methyltransferase family.

The protein resides in the cytoplasm. The catalysed reaction is [protein]-L-isoaspartate + S-adenosyl-L-methionine = [protein]-L-isoaspartate alpha-methyl ester + S-adenosyl-L-homocysteine. In terms of biological role, catalyzes the methyl esterification of L-isoaspartyl residues in peptides and proteins that result from spontaneous decomposition of normal L-aspartyl and L-asparaginyl residues. It plays a role in the repair and/or degradation of damaged proteins. The protein is Protein-L-isoaspartate O-methyltransferase of Nitrosomonas europaea (strain ATCC 19718 / CIP 103999 / KCTC 2705 / NBRC 14298).